We begin with the raw amino-acid sequence, 257 residues long: uncharacterized protein (257 aa).

A helical transmembrane segment spans residues 6 to 26 (IFWLNLAAIIIISIVVSGGMF).

The protein belongs to the staphylococcal tandem lipoprotein family.

The protein localises to the cell membrane. This is an uncharacterized protein from Staphylococcus aureus (strain MSSA476).